Here is an 87-residue protein sequence, read N- to C-terminus: UPF0250 protein BUsg_472 (87 aa).

The protein belongs to the UPF0250 family.

This is UPF0250 protein BUsg_472 from Buchnera aphidicola subsp. Schizaphis graminum (strain Sg).